Reading from the N-terminus, the 106-residue chain is ATP-dependent Clp protease adapter protein ClpS (106 aa).

This sequence belongs to the ClpS family. Binds to the N-terminal domain of the chaperone ClpA.

In terms of biological role, involved in the modulation of the specificity of the ClpAP-mediated ATP-dependent protein degradation. The chain is ATP-dependent Clp protease adapter protein ClpS from Yersinia pestis bv. Antiqua (strain Antiqua).